Consider the following 278-residue polypeptide: Thiazole synthase (278 aa).

K107 serves as the catalytic Schiff-base intermediate with DXP. Residues G168, 194 to 195, and 216 to 217 each bind 1-deoxy-D-xylulose 5-phosphate; these read AG and AS.

The protein belongs to the ThiG family. In terms of assembly, homotetramer. Forms heterodimers with either ThiH or ThiS.

The protein resides in the cytoplasm. The enzyme catalyses [ThiS sulfur-carrier protein]-C-terminal-Gly-aminoethanethioate + 2-iminoacetate + 1-deoxy-D-xylulose 5-phosphate = [ThiS sulfur-carrier protein]-C-terminal Gly-Gly + 2-[(2R,5Z)-2-carboxy-4-methylthiazol-5(2H)-ylidene]ethyl phosphate + 2 H2O + H(+). Its pathway is cofactor biosynthesis; thiamine diphosphate biosynthesis. Functionally, catalyzes the rearrangement of 1-deoxy-D-xylulose 5-phosphate (DXP) to produce the thiazole phosphate moiety of thiamine. Sulfur is provided by the thiocarboxylate moiety of the carrier protein ThiS. In vitro, sulfur can be provided by H(2)S. The chain is Thiazole synthase from Corynebacterium urealyticum (strain ATCC 43042 / DSM 7109).